A 1097-amino-acid polypeptide reads, in one-letter code: Translation initiation factor IF-2 (1097 aa).

The interval 79–458 (LEKRVSPQAD…RVIKKKPKKA (380 aa)) is disordered. Over residues 97-112 (AKKEASQEKADAHAKL) the composition is skewed to basic and acidic residues. Over residues 157–173 (AATLAVEEAPIAAAPTE) the composition is skewed to low complexity. Composition is skewed to basic and acidic residues over residues 174 to 190 (EPMH…KIDS) and 202 to 221 (VEVH…HAEE). Positions 224–236 (TPTTEASSEETSA) are enriched in low complexity. Polar residues predominate over residues 258 to 267 (RKTQNTTNVS). Residues 268–286 (EENKQHEKQPETLKSDKAM) are compositionally biased toward basic and acidic residues. The span at 340–363 (SDSLQAEISRQQNEISNRFSQSEN) shows a compositional bias: polar residues. Positions 376-385 (HKKKRKRKKN) are enriched in basic residues. Over residues 402–443 (PKQEEKPVKKEKPKEREKPAAGKKEQTPGKKPVREDQKERVL) the composition is skewed to basic and acidic residues. Residues 591–761 (TRPPVVTIMG…LVEAELLELK (171 aa)) enclose the tr-type G domain. The segment at 600-607 (GHVDHGKT) is G1. 600–607 (GHVDHGKT) is a GTP binding site. The G2 stretch occupies residues 625 to 629 (GITQH). The interval 647-650 (DTPG) is G3. GTP contacts are provided by residues 647–651 (DTPGH) and 701–704 (NKID). The interval 701–704 (NKID) is G4. Residues 737–739 (SAK) form a G5 region.

This sequence belongs to the TRAFAC class translation factor GTPase superfamily. Classic translation factor GTPase family. IF-2 subfamily.

The protein localises to the cytoplasm. Its function is as follows. One of the essential components for the initiation of protein synthesis. Protects formylmethionyl-tRNA from spontaneous hydrolysis and promotes its binding to the 30S ribosomal subunits. Also involved in the hydrolysis of GTP during the formation of the 70S ribosomal complex. The polypeptide is Translation initiation factor IF-2 (Chloroherpeton thalassium (strain ATCC 35110 / GB-78)).